The primary structure comprises 115 residues: U31-theraphotoxin-Cg1a (115 aa).

The signal sequence occupies residues 1-18 (MKLCVIIIASLMVASVSG). Residues 19 to 51 (RLRKIKGTELDKKMLLEKLGHGMDIRFEETPRA) constitute a propeptide that is removed on maturation. 4 disulfides stabilise this stretch: Cys-52–Cys-67, Cys-60–Cys-73, Cys-64–Cys-113, and Cys-66–Cys-86.

Belongs to the neurotoxin 03 (Tx2) family. 02 subfamily. As to expression, expressed by the venom gland.

It is found in the secreted. Functionally, probable ion channel inhibitor. In Chilobrachys guangxiensis (Chinese earth tiger tarantula), this protein is U31-theraphotoxin-Cg1a.